Reading from the N-terminus, the 347-residue chain is Heme A synthase (347 aa).

Transmembrane regions (helical) follow at residues Val-14 to Ile-34, Tyr-95 to Phe-115, Leu-125 to Leu-145, Leu-166 to Leu-186, Leu-198 to Ala-218, Phe-260 to Leu-280, Leu-289 to Val-309, and Ile-311 to Leu-331. Position 262 (His-262) interacts with heme. A heme-binding site is contributed by His-317.

It belongs to the COX15/CtaA family. Type 2 subfamily. In terms of assembly, interacts with CtaB. Heme b serves as cofactor.

The protein resides in the cell membrane. It carries out the reaction Fe(II)-heme o + 2 A + H2O = Fe(II)-heme a + 2 AH2. It functions in the pathway porphyrin-containing compound metabolism; heme A biosynthesis; heme A from heme O: step 1/1. Functionally, catalyzes the conversion of heme O to heme A by two successive hydroxylations of the methyl group at C8. The first hydroxylation forms heme I, the second hydroxylation results in an unstable dihydroxymethyl group, which spontaneously dehydrates, resulting in the formyl group of heme A. The protein is Heme A synthase of Ehrlichia canis (strain Jake).